The sequence spans 372 residues: NAD(P)H-quinone oxidoreductase subunit 1 (372 aa).

The next 8 helical transmembrane spans lie at 27 to 47, 97 to 117, 128 to 148, 166 to 186, 204 to 224, 254 to 274, 308 to 328, and 351 to 371; these read AVWM…GVLI, ALFT…YLIV, LGIG…GLLM, AAQS…IAMM, ILGW…IAAL, FALF…MVAI, AVGI…AILL, and VGLV…IAFG.

The protein belongs to the complex I subunit 1 family. NDH-1 is composed of at least 11 different subunits.

Its subcellular location is the cellular thylakoid membrane. The catalysed reaction is a plastoquinone + NADH + (n+1) H(+)(in) = a plastoquinol + NAD(+) + n H(+)(out). The enzyme catalyses a plastoquinone + NADPH + (n+1) H(+)(in) = a plastoquinol + NADP(+) + n H(+)(out). NDH-1 shuttles electrons from an unknown electron donor, via FMN and iron-sulfur (Fe-S) centers, to quinones in the respiratory and/or the photosynthetic chain. The immediate electron acceptor for the enzyme in this species is believed to be plastoquinone. Couples the redox reaction to proton translocation, and thus conserves the redox energy in a proton gradient. In Cyanothece sp. (strain PCC 7425 / ATCC 29141), this protein is NAD(P)H-quinone oxidoreductase subunit 1.